The primary structure comprises 139 residues: Translation initiation factor 2 subunit beta (139 aa).

It belongs to the eIF-2-beta/eIF-5 family. Heterotrimer composed of an alpha, a beta and a gamma chain.

In terms of biological role, eIF-2 functions in the early steps of protein synthesis by forming a ternary complex with GTP and initiator tRNA. This chain is Translation initiation factor 2 subunit beta, found in Saccharolobus solfataricus (strain ATCC 35092 / DSM 1617 / JCM 11322 / P2) (Sulfolobus solfataricus).